The chain runs to 367 residues: Probable dual-specificity RNA methyltransferase RlmN (367 aa).

E92 acts as the Proton acceptor in catalysis. The Radical SAM core domain maps to Q98 to N326. C105 and C341 form a disulfide bridge. Residues C112, C116, and C119 each coordinate [4Fe-4S] cluster. S-adenosyl-L-methionine contacts are provided by residues G164–E165, S196, S219–H221, and N297. The active-site S-methylcysteine intermediate is C341.

This sequence belongs to the radical SAM superfamily. RlmN family. [4Fe-4S] cluster serves as cofactor.

The protein localises to the cytoplasm. It catalyses the reaction adenosine(2503) in 23S rRNA + 2 reduced [2Fe-2S]-[ferredoxin] + 2 S-adenosyl-L-methionine = 2-methyladenosine(2503) in 23S rRNA + 5'-deoxyadenosine + L-methionine + 2 oxidized [2Fe-2S]-[ferredoxin] + S-adenosyl-L-homocysteine. The catalysed reaction is adenosine(37) in tRNA + 2 reduced [2Fe-2S]-[ferredoxin] + 2 S-adenosyl-L-methionine = 2-methyladenosine(37) in tRNA + 5'-deoxyadenosine + L-methionine + 2 oxidized [2Fe-2S]-[ferredoxin] + S-adenosyl-L-homocysteine. Its function is as follows. Specifically methylates position 2 of adenine 2503 in 23S rRNA and position 2 of adenine 37 in tRNAs. The polypeptide is Probable dual-specificity RNA methyltransferase RlmN (Listeria innocua serovar 6a (strain ATCC BAA-680 / CLIP 11262)).